Consider the following 108-residue polypeptide: uncharacterized protein (108 aa).

This is an uncharacterized protein from Bacillus subtilis (strain 168).